The sequence spans 940 residues: DNA gyrase subunit A (940 aa).

A disordered region spans residues 1-22 (MSDHTNPPSAPPDDDPNGGSLL). A Topo IIA-type catalytic domain is found at 48–538 (LPDARDGLKP…SLADQDDESL (491 aa)). Tyr-136 functions as the O-(5'-phospho-DNA)-tyrosine intermediate in the catalytic mechanism. The short motif at 565–571 (QHRGGRG) is the GyrA-box element. The span at 914–924 (ESVDDNGDDAD) shows a compositional bias: acidic residues. The interval 914–940 (ESVDDNGDDADSVAPAAPDGQVTDSDD) is disordered.

This sequence belongs to the type II topoisomerase GyrA/ParC subunit family. Heterotetramer, composed of two GyrA and two GyrB chains. In the heterotetramer, GyrA contains the active site tyrosine that forms a transient covalent intermediate with DNA, while GyrB binds cofactors and catalyzes ATP hydrolysis.

The protein localises to the cytoplasm. The catalysed reaction is ATP-dependent breakage, passage and rejoining of double-stranded DNA.. Functionally, a type II topoisomerase that negatively supercoils closed circular double-stranded (ds) DNA in an ATP-dependent manner to modulate DNA topology and maintain chromosomes in an underwound state. Negative supercoiling favors strand separation, and DNA replication, transcription, recombination and repair, all of which involve strand separation. Also able to catalyze the interconversion of other topological isomers of dsDNA rings, including catenanes and knotted rings. Type II topoisomerases break and join 2 DNA strands simultaneously in an ATP-dependent manner. This chain is DNA gyrase subunit A, found in Granulibacter bethesdensis (strain ATCC BAA-1260 / CGDNIH1).